Reading from the N-terminus, the 617-residue chain is 1-deoxy-D-xylulose-5-phosphate synthase (617 aa).

Thiamine diphosphate is bound by residues H77 and 118 to 120; that span reads GHS. D149 contacts Mg(2+). Residues 150–151, N178, Y287, and E368 each bind thiamine diphosphate; that span reads GA. N178 provides a ligand contact to Mg(2+).

This sequence belongs to the transketolase family. DXPS subfamily. Homodimer. It depends on Mg(2+) as a cofactor. The cofactor is thiamine diphosphate.

It catalyses the reaction D-glyceraldehyde 3-phosphate + pyruvate + H(+) = 1-deoxy-D-xylulose 5-phosphate + CO2. The protein operates within metabolic intermediate biosynthesis; 1-deoxy-D-xylulose 5-phosphate biosynthesis; 1-deoxy-D-xylulose 5-phosphate from D-glyceraldehyde 3-phosphate and pyruvate: step 1/1. Its function is as follows. Catalyzes the acyloin condensation reaction between C atoms 2 and 3 of pyruvate and glyceraldehyde 3-phosphate to yield 1-deoxy-D-xylulose-5-phosphate (DXP). In Haemophilus ducreyi (strain 35000HP / ATCC 700724), this protein is 1-deoxy-D-xylulose-5-phosphate synthase.